Consider the following 545-residue polypeptide: Chaperonin GroEL (545 aa).

Residues Thr-29 to Pro-32, Lys-50, Asp-86 to Thr-90, Gly-413, and Asp-495 contribute to the ATP site.

This sequence belongs to the chaperonin (HSP60) family. In terms of assembly, forms a cylinder of 14 subunits composed of two heptameric rings stacked back-to-back. Interacts with the co-chaperonin GroES.

The protein resides in the cytoplasm. It catalyses the reaction ATP + H2O + a folded polypeptide = ADP + phosphate + an unfolded polypeptide.. Its function is as follows. Together with its co-chaperonin GroES, plays an essential role in assisting protein folding. The GroEL-GroES system forms a nano-cage that allows encapsulation of the non-native substrate proteins and provides a physical environment optimized to promote and accelerate protein folding. The polypeptide is Chaperonin GroEL (Borrelia garinii subsp. bavariensis (strain ATCC BAA-2496 / DSM 23469 / PBi) (Borreliella bavariensis)).